A 427-amino-acid chain; its full sequence is Trigger factor (427 aa).

The PPIase FKBP-type domain occupies 163–248; that stretch reads GDTVVIDFVG…IHEVKEKEVP (86 aa).

Belongs to the FKBP-type PPIase family. Tig subfamily.

The protein localises to the cytoplasm. The catalysed reaction is [protein]-peptidylproline (omega=180) = [protein]-peptidylproline (omega=0). Involved in protein export. Acts as a chaperone by maintaining the newly synthesized protein in an open conformation. Functions as a peptidyl-prolyl cis-trans isomerase. The sequence is that of Trigger factor from Streptococcus gordonii (strain Challis / ATCC 35105 / BCRC 15272 / CH1 / DL1 / V288).